Reading from the N-terminus, the 207-residue chain is Outer-membrane lipoprotein LolB (207 aa).

The signal sequence occupies residues M1 to A21. C22 is lipidated: N-palmitoyl cysteine. C22 carries S-diacylglycerol cysteine lipidation.

The protein belongs to the LolB family. Monomer.

It is found in the cell outer membrane. Its function is as follows. Plays a critical role in the incorporation of lipoproteins in the outer membrane after they are released by the LolA protein. In Pectobacterium atrosepticum (strain SCRI 1043 / ATCC BAA-672) (Erwinia carotovora subsp. atroseptica), this protein is Outer-membrane lipoprotein LolB.